The primary structure comprises 211 residues: Claudin-13 (211 aa).

The Cytoplasmic segment spans residues 1-8; the sequence is MVVSKQEA. Residues 9-29 form a helical membrane-spanning segment; it reads ISFSVTSLGWVGAIVSCVLPV. Residues 30-80 lie on the Extracellular side of the membrane; sequence WRVTFPDDETDPDATIWEGLWHICQVRENRWIQCTLYDTRILVAQDIKVSR. A helical transmembrane segment spans residues 81-101; the sequence is VFMVICTIGTWLGLLLCVLGD. At 102–118 the chain is on the cytoplasmic side; the sequence is WRINCFMNFTIEENLLK. Residues 119-139 form a helical membrane-spanning segment; sequence VAGGMFLSVGLLMLVPLSWVT. Residues 140–165 are Extracellular-facing; sequence HNIIHGFFNPLLGFSKKVQMGSSLSL. Residues 166 to 186 form a helical membrane-spanning segment; the sequence is AWTSSLLLLLGGILLCVNIPV. Residues 187–211 lie on the Cytoplasmic side of the membrane; that stretch reads CRDFPRCIETPSARPSGANNDTLDV.

Belongs to the claudin family.

Its subcellular location is the cell junction. It localises to the tight junction. The protein resides in the cell membrane. Functionally, plays a major role in tight junction-specific obliteration of the intercellular space, through calcium-independent cell-adhesion activity. This chain is Claudin-13 (Cldn13), found in Mus musculus (Mouse).